The primary structure comprises 222 residues: UPF0502 protein Shewmr7_1629 (222 aa).

This sequence belongs to the UPF0502 family.

The polypeptide is UPF0502 protein Shewmr7_1629 (Shewanella sp. (strain MR-7)).